A 205-amino-acid chain; its full sequence is Holliday junction branch migration complex subunit RuvA (205 aa).

Positions 1–64 (MIGKLRGIVD…DEAIRLIGFT (64 aa)) are domain I. The tract at residues 65 to 143 (TDSEREWFRL…DSMGLSAALE (79 aa)) is domain II. The segment at 144-152 (VGVNGEAVS) is flexible linker. Residues 153 to 205 (SVSAPARDAVSALVNLGYPQAQAMGAVAAAAKRLDDAASTEQLIRHGLKELAR) are domain III.

Belongs to the RuvA family. In terms of assembly, homotetramer. Forms an RuvA(8)-RuvB(12)-Holliday junction (HJ) complex. HJ DNA is sandwiched between 2 RuvA tetramers; dsDNA enters through RuvA and exits via RuvB. An RuvB hexamer assembles on each DNA strand where it exits the tetramer. Each RuvB hexamer is contacted by two RuvA subunits (via domain III) on 2 adjacent RuvB subunits; this complex drives branch migration. In the full resolvosome a probable DNA-RuvA(4)-RuvB(12)-RuvC(2) complex forms which resolves the HJ.

The protein localises to the cytoplasm. The RuvA-RuvB-RuvC complex processes Holliday junction (HJ) DNA during genetic recombination and DNA repair, while the RuvA-RuvB complex plays an important role in the rescue of blocked DNA replication forks via replication fork reversal (RFR). RuvA specifically binds to HJ cruciform DNA, conferring on it an open structure. The RuvB hexamer acts as an ATP-dependent pump, pulling dsDNA into and through the RuvAB complex. HJ branch migration allows RuvC to scan DNA until it finds its consensus sequence, where it cleaves and resolves the cruciform DNA. The polypeptide is Holliday junction branch migration complex subunit RuvA (Parvibaculum lavamentivorans (strain DS-1 / DSM 13023 / NCIMB 13966)).